A 242-amino-acid polypeptide reads, in one-letter code: Peptidyl-prolyl cis-trans isomerase FKBP20-2, chloroplastic (242 aa).

The transit peptide at 1-31 directs the protein to the chloroplast; the sequence is MVTILSTPLSPRLTFLCETKLSLSRSNRSVC. Residues 32–67 constitute a thylakoid transit peptide; the sequence is CSLSEEPKDQCLSRRSLVYVLVASPCLLLPALSSSA. The PPIase FKBP-type domain maps to 138–225; sequence GQQVTFHYIG…VFDVELLSIQ (88 aa). A disulfide bond links cysteine 227 and cysteine 241.

Belongs to the FKBP-type PPIase family. As to quaternary structure, interacts in vitro with LTO1.

The protein localises to the plastid. It localises to the chloroplast thylakoid lumen. It catalyses the reaction [protein]-peptidylproline (omega=180) = [protein]-peptidylproline (omega=0). In terms of biological role, PPIases accelerate the folding of proteins. It catalyzes the cis-trans isomerization of proline imidic peptide bonds in oligopeptides. Involved in the accumulation of the PSII complex. This Arabidopsis thaliana (Mouse-ear cress) protein is Peptidyl-prolyl cis-trans isomerase FKBP20-2, chloroplastic.